We begin with the raw amino-acid sequence, 125 residues long: Fluoride-specific ion channel FluC (125 aa).

4 consecutive transmembrane segments (helical) span residues 4 to 24 (ILLVGAGGALGSVLRYLVGLW), 32 to 52 (AFPWGTLFVNVTGSFLIGFLA), 68 to 88 (FLITGVLGGYTTFSAFSLDAI), and 100 to 120 (LAYIVASVGLSMLAVFAGLAL). Na(+) is bound by residues G75 and T78.

It belongs to the fluoride channel Fluc/FEX (TC 1.A.43) family.

It is found in the cell inner membrane. It catalyses the reaction fluoride(in) = fluoride(out). Its activity is regulated as follows. Na(+) is not transported, but it plays an essential structural role and its presence is essential for fluoride channel function. Its function is as follows. Fluoride-specific ion channel. Important for reducing fluoride concentration in the cell, thus reducing its toxicity. The protein is Fluoride-specific ion channel FluC of Rhizobium meliloti (strain 1021) (Ensifer meliloti).